The chain runs to 360 residues: DNA polymerase IV (360 aa).

Residues 8–189 enclose the UmuC domain; it reads IIHVDMDCFF…LPLEKIPGVG (182 aa). Positions 12 and 107 each coordinate Mg(2+). The active site involves Glu108.

It belongs to the DNA polymerase type-Y family. As to quaternary structure, monomer. Mg(2+) is required as a cofactor.

It is found in the cytoplasm. It catalyses the reaction DNA(n) + a 2'-deoxyribonucleoside 5'-triphosphate = DNA(n+1) + diphosphate. Poorly processive, error-prone DNA polymerase involved in untargeted mutagenesis. Copies undamaged DNA at stalled replication forks, which arise in vivo from mismatched or misaligned primer ends. These misaligned primers can be extended by PolIV. Exhibits no 3'-5' exonuclease (proofreading) activity. May be involved in translesional synthesis, in conjunction with the beta clamp from PolIII. This Vibrio cholerae serotype O1 (strain ATCC 39541 / Classical Ogawa 395 / O395) protein is DNA polymerase IV.